Here is a 111-residue protein sequence, read N- to C-terminus: Cornifelin homolog A (111 aa).

This sequence belongs to the cornifelin family.

The chain is Cornifelin homolog A (cnfn-a) from Xenopus laevis (African clawed frog).